The sequence spans 205 residues: Probable GTP-binding protein EngB (205 aa).

The 175-residue stretch at 27-201 (TGIEIAFAGR…AVKLDFWFSP (175 aa)) folds into the EngB-type G domain. GTP is bound by residues 35-42 (GRSNAGKS), 62-66 (GRTQL), 80-83 (DLPG), 147-150 (TKAD), and 180-182 (FSA). Mg(2+)-binding residues include Ser42 and Thr64.

The protein belongs to the TRAFAC class TrmE-Era-EngA-EngB-Septin-like GTPase superfamily. EngB GTPase family. Mg(2+) is required as a cofactor.

Functionally, necessary for normal cell division and for the maintenance of normal septation. The protein is Probable GTP-binding protein EngB of Haemophilus influenzae (strain PittGG).